We begin with the raw amino-acid sequence, 214 residues long: Probable transaldolase (214 aa).

Lys83 acts as the Schiff-base intermediate with substrate in catalysis.

The protein belongs to the transaldolase family. Type 3B subfamily.

Its subcellular location is the cytoplasm. The enzyme catalyses D-sedoheptulose 7-phosphate + D-glyceraldehyde 3-phosphate = D-erythrose 4-phosphate + beta-D-fructose 6-phosphate. Its pathway is carbohydrate degradation; pentose phosphate pathway; D-glyceraldehyde 3-phosphate and beta-D-fructose 6-phosphate from D-ribose 5-phosphate and D-xylulose 5-phosphate (non-oxidative stage): step 2/3. Functionally, transaldolase is important for the balance of metabolites in the pentose-phosphate pathway. The sequence is that of Probable transaldolase from Geobacter metallireducens (strain ATCC 53774 / DSM 7210 / GS-15).